The primary structure comprises 482 residues: Protein DETOXIFICATION 9 (482 aa).

12 consecutive transmembrane segments (helical) span residues 32 to 49, 64 to 84, 111 to 131, 144 to 164, 180 to 200, 209 to 229, 261 to 281, 289 to 309, 332 to 352, 374 to 394, 403 to 423, and 435 to 455; these read VASMAAPMVAVNMSQYLL, ALAGIALGSSFANVTGFGVLF, FTSIVFLLIISVPISILWMFM, IAELAGVYCLWLVPALFGYSV, PMVLSSLAALSFHVPLCWLMV, GAAASIGISYWLNAVFLWVYM, AMMCCLEWLAFEVITLLSGLL, SVISICLTTSSLHYNLVNGIG, AAAAIIIAAVESVIVSSSLFL, ITPILCISILMDSFLTVLSGI, IGAYVNITSYYVIGIPVGLLL, and WAGLVTGSTLQTLILFLVIGF.

This sequence belongs to the multi antimicrobial extrusion (MATE) (TC 2.A.66.1) family.

The protein localises to the membrane. This chain is Protein DETOXIFICATION 9, found in Arabidopsis thaliana (Mouse-ear cress).